The sequence spans 569 residues: MSFQIETVPTKPYEDQKPGTSGLRKKTKVFKDEPNYTENFIQSIMEAIPEGSKGATLVVGGDGRYYNDVILHKIAAIGAANGIKKLVIGQHGLLSTPAASHIMRTYEEKCTGGIILTASHNPGGPENDMGIKYNLSNGGPAPESVTNAIWEISKKLTSYKIIKDFPELDLGTIGKNKKYGPLLVDIIDITKDYVNFLKEIFDFDLIKKFIDNQRSTKNWKLLFDSMNGVTGPYGKAIFVDEFGLPADEVLQNWHPSPDFGGMHPDPNLTYASSLVKRVDREKIEFGAASDGDGDRNMIYGYGPSFVSPGDSVAIIAEYAAEIPYFAKQGIYGLARSFPTSGAIDRVAKAHGLNCYEVPTGWKFFCALFDAKKLSICGEESFGTGSNHVREKDGVWAIMAWLNILAIYNKHHPENEASIKTIQNEFWAKYGRTFFTRYDFEKVETEKANKIVDQLRAYVTKSGVVNSAFPADESLKVTDCGDFSYTDLDGSVSDHQGLYVKLSNGARFVLRLSGTGSSGATIRLYIEKYCDDKSQYQKTAEEYLKPIINSVIKFLNFKQVLGTEEPTVRT.

The interval 1-23 (MSFQIETVPTKPYEDQKPGTSGL) is disordered. At S2 the chain carries N-acetylserine. Residue R24 coordinates alpha-D-glucose 1,6-bisphosphate. 2 positions are modified to phosphothreonine: T111 and T117. S119 is a binding site for alpha-D-glucose 1,6-bisphosphate. S119 functions as the Phosphoserine intermediate in the catalytic mechanism. The Mg(2+) site is built by S119, D290, D292, and D294. S119 is modified (phosphoserine). Residues D294, R295, T359, E378, S380, and K391 each coordinate alpha-D-glucose 1,6-bisphosphate.

Belongs to the phosphohexose mutase family. Monomer. Mg(2+) is required as a cofactor. Requires Zn(2+) as cofactor. O-glycosylated with mannose residues. Substrate of UDP-glucose--glycoprotein glucose phosphotransferase, linking glucose in a phosphodiester linkage to O-linked mannose.

The protein localises to the cytoplasm. It catalyses the reaction alpha-D-glucose 1-phosphate = alpha-D-glucose 6-phosphate. The catalysed reaction is O-phospho-L-seryl-[protein] + alpha-D-glucose 1-phosphate = alpha-D-glucose 1,6-bisphosphate + L-seryl-[protein]. The enzyme catalyses alpha-D-glucose 1,6-bisphosphate + L-seryl-[protein] = O-phospho-L-seryl-[protein] + alpha-D-glucose 6-phosphate. Major phosphoglucomutase isozyme that catalyzes the reversible isomerization of alpha-D-glucose 1-phosphate to alpha-D-glucose 6-phosphate. The mechanism proceeds via the intermediate compound alpha-D-glucose 1,6-bisphosphate. Constitutes about 80-90% of the phosphoglucomutase activity in the cell. Key enzyme in hexose metabolism. The forward reaction is an essential step in the energy metabolism of galactose since the product of the galactose pathway enzymes in yeast is glucose 1-phosphate. The reverse reaction is an essential step for biosynthesis when carbon sources other than galactose are the energy source because glucose 1-phosphate is the starting point for the synthesis of UDP-glucose, which acts as a precursor for the synthesis of oligosaccharides and trehalose. The protein is Phosphoglucomutase 2 of Saccharomyces cerevisiae (strain ATCC 204508 / S288c) (Baker's yeast).